Here is a 316-residue protein sequence, read N- to C-terminus: Ornithine carbamoyltransferase (316 aa).

Carbamoyl phosphate-binding positions include 59 to 62 (STRT), glutamine 86, arginine 110, and 137 to 140 (HPCQ). L-ornithine is bound by residues asparagine 168, aspartate 232, and 236–237 (SM). Carbamoyl phosphate is bound by residues 273–274 (CL) and arginine 301.

Belongs to the aspartate/ornithine carbamoyltransferase superfamily. OTCase family.

The protein localises to the cytoplasm. It catalyses the reaction carbamoyl phosphate + L-ornithine = L-citrulline + phosphate + H(+). It participates in amino-acid biosynthesis; L-arginine biosynthesis; L-arginine from L-ornithine and carbamoyl phosphate: step 1/3. Its function is as follows. Reversibly catalyzes the transfer of the carbamoyl group from carbamoyl phosphate (CP) to the N(epsilon) atom of ornithine (ORN) to produce L-citrulline. This is Ornithine carbamoyltransferase from Listeria innocua serovar 6a (strain ATCC BAA-680 / CLIP 11262).